The following is a 502-amino-acid chain: ATP synthase subunit alpha (502 aa).

169–176 contacts ATP; that stretch reads GDRQTGKT.

The protein belongs to the ATPase alpha/beta chains family. F-type ATPases have 2 components, CF(1) - the catalytic core - and CF(0) - the membrane proton channel. CF(1) has five subunits: alpha(3), beta(3), gamma(1), delta(1), epsilon(1). CF(0) has three main subunits: a(1), b(2) and c(9-12). The alpha and beta chains form an alternating ring which encloses part of the gamma chain. CF(1) is attached to CF(0) by a central stalk formed by the gamma and epsilon chains, while a peripheral stalk is formed by the delta and b chains.

Its subcellular location is the cell membrane. It catalyses the reaction ATP + H2O + 4 H(+)(in) = ADP + phosphate + 5 H(+)(out). Functionally, produces ATP from ADP in the presence of a proton gradient across the membrane. The alpha chain is a regulatory subunit. In Streptococcus pyogenes serotype M12 (strain MGAS9429), this protein is ATP synthase subunit alpha.